Reading from the N-terminus, the 502-residue chain is ATP synthase subunit alpha (502 aa).

An ATP-binding site is contributed by 169–176 (GDRQTGKT).

Belongs to the ATPase alpha/beta chains family. In terms of assembly, F-type ATPases have 2 components, CF(1) - the catalytic core - and CF(0) - the membrane proton channel. CF(1) has five subunits: alpha(3), beta(3), gamma(1), delta(1), epsilon(1). CF(0) has three main subunits: a(1), b(2) and c(9-12). The alpha and beta chains form an alternating ring which encloses part of the gamma chain. CF(1) is attached to CF(0) by a central stalk formed by the gamma and epsilon chains, while a peripheral stalk is formed by the delta and b chains.

The protein localises to the cell membrane. The enzyme catalyses ATP + H2O + 4 H(+)(in) = ADP + phosphate + 5 H(+)(out). In terms of biological role, produces ATP from ADP in the presence of a proton gradient across the membrane. The alpha chain is a regulatory subunit. In Desulfitobacterium hafniense (strain Y51), this protein is ATP synthase subunit alpha.